Consider the following 190-residue polypeptide: Potassium-transporting ATPase KdpC subunit (190 aa).

Residues 11-31 (LIVLMSLITGVAYPLVVTGVA) form a helical membrane-spanning segment.

Belongs to the KdpC family. In terms of assembly, the system is composed of three essential subunits: KdpA, KdpB and KdpC.

The protein localises to the cell inner membrane. Functionally, part of the high-affinity ATP-driven potassium transport (or Kdp) system, which catalyzes the hydrolysis of ATP coupled with the electrogenic transport of potassium into the cytoplasm. This subunit acts as a catalytic chaperone that increases the ATP-binding affinity of the ATP-hydrolyzing subunit KdpB by the formation of a transient KdpB/KdpC/ATP ternary complex. The chain is Potassium-transporting ATPase KdpC subunit from Pseudomonas savastanoi pv. phaseolicola (strain 1448A / Race 6) (Pseudomonas syringae pv. phaseolicola (strain 1448A / Race 6)).